The primary structure comprises 496 residues: Cobyric acid synthase (496 aa).

The region spanning 255-445 (DLEIAVLKLP…LHGLLDNGPW (191 aa)) is the GATase cobBQ-type domain. Residue Cys-336 is the Nucleophile of the active site. Residue His-437 is part of the active site.

It belongs to the CobB/CobQ family. CobQ subfamily.

It participates in cofactor biosynthesis; adenosylcobalamin biosynthesis. Catalyzes amidations at positions B, D, E, and G on adenosylcobyrinic A,C-diamide. NH(2) groups are provided by glutamine, and one molecule of ATP is hydrogenolyzed for each amidation. The protein is Cobyric acid synthase of Parasynechococcus marenigrum (strain WH8102).